Consider the following 398-residue polypeptide: Protochlorophyllide reductase, chloroplastic (398 aa).

It belongs to the short-chain dehydrogenases/reductases (SDR) family. POR subfamily.

Its subcellular location is the plastid. It localises to the chloroplast. The catalysed reaction is chlorophyllide a + NADP(+) = protochlorophyllide a + NADPH + H(+). The protein operates within porphyrin-containing compound metabolism; chlorophyll biosynthesis. Phototransformation of protochlorophyllide (Pchlide) to chlorophyllide (Chlide). The polypeptide is Protochlorophyllide reductase, chloroplastic (POR1) (Daucus carota (Wild carrot)).